The chain runs to 380 residues: S-adenosylmethionine:tRNA ribosyltransferase-isomerase (380 aa).

Residues 1–15 (MHSKHPTDTARRCET) are compositionally biased toward basic and acidic residues. Residues 1 to 24 (MHSKHPTDTARRCETGTDSSDTAA) are disordered.

Belongs to the QueA family. As to quaternary structure, monomer.

The protein resides in the cytoplasm. The catalysed reaction is 7-aminomethyl-7-carbaguanosine(34) in tRNA + S-adenosyl-L-methionine = epoxyqueuosine(34) in tRNA + adenine + L-methionine + 2 H(+). Its pathway is tRNA modification; tRNA-queuosine biosynthesis. In terms of biological role, transfers and isomerizes the ribose moiety from AdoMet to the 7-aminomethyl group of 7-deazaguanine (preQ1-tRNA) to give epoxyqueuosine (oQ-tRNA). This chain is S-adenosylmethionine:tRNA ribosyltransferase-isomerase, found in Oleidesulfovibrio alaskensis (strain ATCC BAA-1058 / DSM 17464 / G20) (Desulfovibrio alaskensis).